The following is a 306-amino-acid chain: Light-independent protochlorophyllide reductase iron-sulfur ATP-binding protein (306 aa).

The tract at residues 1-31 (MREAAGLEARGLKSPPILKGQDGEGSLQVHQ) is disordered. ATP-binding positions include 50–55 (GIGKST) and Lys79. Position 54 (Ser54) interacts with Mg(2+). The [4Fe-4S] cluster site is built by Cys135 and Cys169. 220-221 (NR) is a binding site for ATP.

The protein belongs to the NifH/BchL/ChlL family. As to quaternary structure, homodimer. Protochlorophyllide reductase is composed of three subunits; BchL, BchN and BchB. [4Fe-4S] cluster serves as cofactor.

The enzyme catalyses chlorophyllide a + oxidized 2[4Fe-4S]-[ferredoxin] + 2 ADP + 2 phosphate = protochlorophyllide a + reduced 2[4Fe-4S]-[ferredoxin] + 2 ATP + 2 H2O. The protein operates within porphyrin-containing compound metabolism; bacteriochlorophyll biosynthesis (light-independent). In terms of biological role, component of the dark-operative protochlorophyllide reductase (DPOR) that uses Mg-ATP and reduced ferredoxin to reduce ring D of protochlorophyllide (Pchlide) to form chlorophyllide a (Chlide). This reaction is light-independent. The L component serves as a unique electron donor to the NB-component of the complex, and binds Mg-ATP. In Jannaschia sp. (strain CCS1), this protein is Light-independent protochlorophyllide reductase iron-sulfur ATP-binding protein.